The primary structure comprises 377 residues: Chaperone protein DnaJ (377 aa).

The J domain maps to 5–70 (DYYQVLGVSR…KKRSAYDQLG (66 aa)). The CR-type zinc-finger motif lies at 138–216 (GVTKIISFKT…CYGEGRYINT (79 aa)). Residues Cys-151, Cys-154, Cys-168, Cys-171, Cys-190, Cys-193, Cys-204, and Cys-207 each contribute to the Zn(2+) site. CXXCXGXG motif repeat units lie at residues 151-158 (CDACAGKG), 168-175 (CPTCRGSG), 190-197 (CQTCRGAG), and 204-211 (CTKCYGEG).

This sequence belongs to the DnaJ family. In terms of assembly, homodimer. It depends on Zn(2+) as a cofactor.

It is found in the cytoplasm. Participates actively in the response to hyperosmotic and heat shock by preventing the aggregation of stress-denatured proteins and by disaggregating proteins, also in an autonomous, DnaK-independent fashion. Unfolded proteins bind initially to DnaJ; upon interaction with the DnaJ-bound protein, DnaK hydrolyzes its bound ATP, resulting in the formation of a stable complex. GrpE releases ADP from DnaK; ATP binding to DnaK triggers the release of the substrate protein, thus completing the reaction cycle. Several rounds of ATP-dependent interactions between DnaJ, DnaK and GrpE are required for fully efficient folding. Also involved, together with DnaK and GrpE, in the DNA replication of plasmids through activation of initiation proteins. In Orientia tsutsugamushi (strain Boryong) (Rickettsia tsutsugamushi), this protein is Chaperone protein DnaJ.